The sequence spans 282 residues: Biotin synthase (282 aa).

Residues 1–228 form the Radical SAM core domain; it reads MQEIFLCSIS…NARLMVAGGR (228 aa). [4Fe-4S] cluster is bound by residues cysteine 17, cysteine 21, and cysteine 24. Residues cysteine 61, cysteine 96, cysteine 154, and arginine 221 each coordinate [2Fe-2S] cluster.

This sequence belongs to the radical SAM superfamily. Biotin synthase family. In terms of assembly, homodimer. [4Fe-4S] cluster is required as a cofactor. Requires [2Fe-2S] cluster as cofactor.

The catalysed reaction is (4R,5S)-dethiobiotin + (sulfur carrier)-SH + 2 reduced [2Fe-2S]-[ferredoxin] + 2 S-adenosyl-L-methionine = (sulfur carrier)-H + biotin + 2 5'-deoxyadenosine + 2 L-methionine + 2 oxidized [2Fe-2S]-[ferredoxin]. The protein operates within cofactor biosynthesis; biotin biosynthesis; biotin from 7,8-diaminononanoate: step 2/2. In terms of biological role, catalyzes the conversion of dethiobiotin (DTB) to biotin by the insertion of a sulfur atom into dethiobiotin via a radical-based mechanism. This Helicobacter pylori (strain P12) protein is Biotin synthase.